Consider the following 475-residue polypeptide: Actin-related protein 10 (475 aa).

Belongs to the actin family.

The protein localises to the cytoplasm. The protein resides in the cytoskeleton. The protein is Actin-related protein 10 of Dictyostelium discoideum (Social amoeba).